The primary structure comprises 557 residues: Membrane protein insertase YidC (557 aa).

Helical transmembrane passes span 3 to 23 (IKRT…FDNW), 363 to 383 (FVGN…AVFF), 437 to 457 (LPVV…LASV), 476 to 496 (PYFI…KLNP), and 507 to 527 (MMFM…GLVL).

Belongs to the OXA1/ALB3/YidC family. Type 1 subfamily. In terms of assembly, interacts with the Sec translocase complex via SecD. Specifically interacts with transmembrane segments of nascent integral membrane proteins during membrane integration.

It is found in the cell inner membrane. In terms of biological role, required for the insertion and/or proper folding and/or complex formation of integral membrane proteins into the membrane. Involved in integration of membrane proteins that insert both dependently and independently of the Sec translocase complex, as well as at least some lipoproteins. Aids folding of multispanning membrane proteins. In Burkholderia thailandensis (strain ATCC 700388 / DSM 13276 / CCUG 48851 / CIP 106301 / E264), this protein is Membrane protein insertase YidC.